Reading from the N-terminus, the 285-residue chain is tRNA (cytidine(32)/guanosine(34)-2'-O)-methyltransferase (285 aa).

Residues glycine 53, tryptophan 55, aspartate 83, aspartate 99, and aspartate 124 each coordinate S-adenosyl-L-methionine. Lysine 164 (proton acceptor) is an active-site residue.

Belongs to the class I-like SAM-binding methyltransferase superfamily. RNA methyltransferase RlmE family. TRM7 subfamily.

The protein resides in the cytoplasm. The catalysed reaction is cytidine(32)/guanosine(34) in tRNA + 2 S-adenosyl-L-methionine = 2'-O-methylcytidine(32)/2'-O-methylguanosine(34) in tRNA + 2 S-adenosyl-L-homocysteine + 2 H(+). Methylates the 2'-O-ribose of nucleotides at positions 32 and 34 of the tRNA anticodon loop of substrate tRNAs. Requires trm732 for methylation of the cytidine at position 32 of the anticodon loop of substrate tRNAs. Requires trm734 for methylation of the nucleotide at position 34 of the anticodon loop of substrate tRNAs. Methylates tRNA(Phe). The sequence is that of tRNA (cytidine(32)/guanosine(34)-2'-O)-methyltransferase from Schizosaccharomyces pombe (strain 972 / ATCC 24843) (Fission yeast).